Consider the following 299-residue polypeptide: ClpXP adapter protein SpxH (299 aa).

Belongs to the SpxH family. Interacts with Spx. Interacts with SpxO/YuzO.

It localises to the cytoplasm. Its activity is regulated as follows. Irreversible aggregation upon several stress conditions prevents interaction with Spx and therefore leads to Spx stabilization. Inhibited by interaction with SpxO/YuzO. Functionally, adapter protein required for efficient degradation of Spx by ClpXP under non-stress conditions. Interaction with Spx stabilizes Spx and exposes the C-terminus of Spx for recognition and proteolysis by ClpXP. Is specific for Spx and does not enhance proteolysis by ClpCP protease. Probably binds 2 zinc ions. The protein is ClpXP adapter protein SpxH of Bacillus subtilis (strain 168).